A 173-amino-acid chain; its full sequence is NADH-ubiquinone oxidoreductase chain 6 (173 aa).

A run of 5 helical transmembrane segments spans residues 1–21 (MTYFVLFLGLCFVLGGLAVAS), 27–47 (YGVVGLVLASVAGCGWLLSLG), 48–68 (ASFVSLVLFMVYLGGMLVVFV), 87–107 (VIGYGMGFIVVLVVGVVISGF), and 139–159 (WGVGMFLAAGWGLLLTLFVVL).

The protein belongs to the complex I subunit 6 family.

The protein resides in the mitochondrion membrane. It catalyses the reaction a ubiquinone + NADH + 5 H(+)(in) = a ubiquinol + NAD(+) + 4 H(+)(out). Functionally, core subunit of the mitochondrial membrane respiratory chain NADH dehydrogenase (Complex I) that is believed to belong to the minimal assembly required for catalysis. Complex I functions in the transfer of electrons from NADH to the respiratory chain. The immediate electron acceptor for the enzyme is believed to be ubiquinone. This chain is NADH-ubiquinone oxidoreductase chain 6 (MT-ND6), found in Brachyramphus marmoratus (Marbled murrelet).